The following is a 454-amino-acid chain: Chromosomal replication initiator protein DnaA (454 aa).

The domain I, interacts with DnaA modulators stretch occupies residues 1–83 (MTEKEHFFWN…IKVEYVFDEA (83 aa)). Residues 83 to 113 (ALVSETKPTLANNDFSNKREQQTPDLPTLNS) are domain II. The interval 114–332 (DLNSKYTFDN…GALKDISLVA (219 aa)) is domain III, AAA+ region. ATP-binding residues include Gly-158, Gly-160, Lys-161, and Thr-162. Residues 333-454 (NVRQLDTITV…EIDTIKNKIK (122 aa)) are domain IV, binds dsDNA.

This sequence belongs to the DnaA family. Oligomerizes as a right-handed, spiral filament on DNA at oriC.

The protein resides in the cytoplasm. Functionally, plays an essential role in the initiation and regulation of chromosomal replication. ATP-DnaA binds to the origin of replication (oriC) to initiate formation of the DNA replication initiation complex once per cell cycle. Binds the DnaA box (a 9 base pair repeat at the origin) and separates the double-stranded (ds)DNA. Forms a right-handed helical filament on oriC DNA; dsDNA binds to the exterior of the filament while single-stranded (ss)DNA is stabiized in the filament's interior. The ATP-DnaA-oriC complex binds and stabilizes one strand of the AT-rich DNA unwinding element (DUE), permitting loading of DNA polymerase. After initiation quickly degrades to an ADP-DnaA complex that is not apt for DNA replication. Binds acidic phospholipids. This Streptococcus thermophilus (strain ATCC BAA-250 / LMG 18311) protein is Chromosomal replication initiator protein DnaA.